A 364-amino-acid chain; its full sequence is DNA polymerase IV (364 aa).

Residues 14–198 enclose the UmuC domain; sequence IIHIDMDAFF…LPIEKFHGVG (185 aa). Mg(2+) is bound by residues aspartate 18 and aspartate 116. Residue glutamate 117 is part of the active site.

Belongs to the DNA polymerase type-Y family. In terms of assembly, monomer. The cofactor is Mg(2+).

The protein resides in the cytoplasm. The catalysed reaction is DNA(n) + a 2'-deoxyribonucleoside 5'-triphosphate = DNA(n+1) + diphosphate. Functionally, poorly processive, error-prone DNA polymerase involved in untargeted mutagenesis. Copies undamaged DNA at stalled replication forks, which arise in vivo from mismatched or misaligned primer ends. These misaligned primers can be extended by PolIV. Exhibits no 3'-5' exonuclease (proofreading) activity. May be involved in translesional synthesis, in conjunction with the beta clamp from PolIII. The polypeptide is DNA polymerase IV (Streptococcus pyogenes serotype M2 (strain MGAS10270)).